Consider the following 409-residue polypeptide: Arginine deiminase (409 aa).

Residue cysteine 399 is the Amidino-cysteine intermediate of the active site.

The protein belongs to the arginine deiminase family.

The protein localises to the cytoplasm. The catalysed reaction is L-arginine + H2O = L-citrulline + NH4(+). It functions in the pathway amino-acid degradation; L-arginine degradation via ADI pathway; carbamoyl phosphate from L-arginine: step 1/2. In Borrelia recurrentis (strain A1), this protein is Arginine deiminase.